Reading from the N-terminus, the 259-residue chain is uncharacterized protein (259 aa).

3 helical membrane-spanning segments follow: residues Ile55 to Ile75, Phe85 to Ser105, and Phe127 to Gly147.

The protein resides in the membrane. This is an uncharacterized protein from Arabidopsis thaliana (Mouse-ear cress).